The sequence spans 219 residues: Probable GTP-binding protein EngB (219 aa).

In terms of domain architecture, EngB-type G spans 24 to 207; it reads VQPEIAFAGR…HALIESWLRP (184 aa). GTP is bound by residues 32-39, 59-63, 81-84, 148-151, and 185-188; these read GRSNAGKS, GRTQH, DLPG, TKCD, and LFSA. Residues S39 and T61 each coordinate Mg(2+).

It belongs to the TRAFAC class TrmE-Era-EngA-EngB-Septin-like GTPase superfamily. EngB GTPase family. Mg(2+) serves as cofactor.

In terms of biological role, necessary for normal cell division and for the maintenance of normal septation. The sequence is that of Probable GTP-binding protein EngB from Burkholderia thailandensis (strain ATCC 700388 / DSM 13276 / CCUG 48851 / CIP 106301 / E264).